Consider the following 526-residue polypeptide: Glutamyl-tRNA(Gln) amidotransferase subunit A, mitochondrial (526 aa).

Lys-76 functions as the Charge relay system in the catalytic mechanism. The tract at residues 147–166 is disordered; that stretch reads QYREKRKQNSHSENEDSNWL. Residue Ser-171 is the Charge relay system of the active site. Ser-195 (acyl-ester intermediate) is an active-site residue.

Belongs to the amidase family. GatA subfamily. Subunit of the heterotrimeric GatCAB amidotransferase (AdT) complex, composed of A (QRSL1), B (GATB) and C (GATC) subunits.

The protein resides in the mitochondrion. The enzyme catalyses L-glutamyl-tRNA(Gln) + L-glutamine + ATP + H2O = L-glutaminyl-tRNA(Gln) + L-glutamate + ADP + phosphate + H(+). Allows the formation of correctly charged Gln-tRNA(Gln) through the transamidation of misacylated Glu-tRNA(Gln) in the mitochondria. The reaction takes place in the presence of glutamine and ATP through an activated gamma-phospho-Glu-tRNA(Gln). This chain is Glutamyl-tRNA(Gln) amidotransferase subunit A, mitochondrial, found in Bos taurus (Bovine).